The primary structure comprises 211 residues: Large ribosomal subunit protein uL4 (211 aa).

A disordered region spans residues 50 to 77; sequence STLTKGEVSGGGKKPYKQKHTGKARQGS. Residues 63–72 are compositionally biased toward basic residues; it reads KPYKQKHTGK.

It belongs to the universal ribosomal protein uL4 family. As to quaternary structure, part of the 50S ribosomal subunit.

Functionally, one of the primary rRNA binding proteins, this protein initially binds near the 5'-end of the 23S rRNA. It is important during the early stages of 50S assembly. It makes multiple contacts with different domains of the 23S rRNA in the assembled 50S subunit and ribosome. Forms part of the polypeptide exit tunnel. This is Large ribosomal subunit protein uL4 from Mycoplasma genitalium (strain ATCC 33530 / DSM 19775 / NCTC 10195 / G37) (Mycoplasmoides genitalium).